We begin with the raw amino-acid sequence, 380 residues long: Ribosomal RNA small subunit methyltransferase, mitochondrial (380 aa).

A mitochondrion-targeting transit peptide spans 1–26 (MILRLKDQTLIKINSTRSYLSSLVFR). S-adenosyl-L-methionine contacts are provided by H70, L72, G97, E118, D146, and N161.

Belongs to the class I-like SAM-binding methyltransferase superfamily. rRNA adenine N(6)-methyltransferase family.

The protein resides in the mitochondrion. It carries out the reaction adenosine(1914)/adenosine(1915) in 18S rRNA + 4 S-adenosyl-L-methionine = N(6)-dimethyladenosine(1914)/N(6)-dimethyladenosine(1915) in 18S rRNA + 4 S-adenosyl-L-homocysteine + 4 H(+). Functionally, N6-adenine methyltransferase which modifies the AA dinucleotide at the plant mitochondrial 18S rRNA nucleotides A1914 and A1915. Not active as mitochondrial transcription factor. This Arabidopsis thaliana (Mouse-ear cress) protein is Ribosomal RNA small subunit methyltransferase, mitochondrial.